The chain runs to 140 residues: Required for drug-induced death protein 1 (140 aa).

Residues 1–95 form a disordered region; that stretch reads MTVGARLRSK…DKPKKRYRRK (95 aa). Acidic residues predominate over residues 29–53; that stretch reads EETDAIVEHLEGEDEDPESQDCERE. A helical membrane pass occupies residues 118 to 140; the sequence is LQGFAAAYSAPFGVATSVVSFVR.

It localises to the membrane. Its function is as follows. Regulates drug efflux through modulation of ABCB1 localization and activity. In Rattus norvegicus (Rat), this protein is Required for drug-induced death protein 1.